The following is a 724-amino-acid chain: Peroxidase mlt-7 (724 aa).

The first 24 residues, 1–24 (MRRLHRNLSLLFLICILNEYRIES), serve as a signal peptide directing secretion. N-linked (GlcNAc...) asparagine glycosylation occurs at Asn7. Positions 25-178 (QTLSPPITDR…GCVPQLSDVG (154 aa)) are excised as a propeptide. The ShKT domain maps to 42–76 (CCDHHEWCRFWASIGECNANKDWMTENCQLACGTC). A disulfide bridge links Cys181 with Cys198. A glycan (N-linked (GlcNAc...) asparagine) is linked at Asn233. His271 serves as the catalytic Proton acceptor. Asp272 lines the Ca(2+) pocket. Cys284 and Cys294 are joined by a disulfide. Ca(2+) is bound by residues Thr335, Tyr337, Asp339, and Ser341. His493 serves as a coordination point for heme b. N-linked (GlcNAc...) asparagine glycans are attached at residues Asn509 and Asn617. 2 disulfide bridges follow: Cys588–Cys645 and Cys686–Cys710.

It belongs to the peroxidase family. The cofactor is heme b. Expressed in the hypodermal cells, specifically the head and seam/body.

The enzyme catalyses 2 a phenolic donor + H2O2 = 2 a phenolic radical donor + 2 H2O. Functionally, plays an essential role in cuticle biogenesis. Required in combination with bli-3 for correct formation of cross-links in cuticle collagens. This is Peroxidase mlt-7 from Caenorhabditis elegans.